Here is a 153-residue protein sequence, read N- to C-terminus: 3-hydroxyacyl-[acyl-carrier-protein] dehydratase FabZ (153 aa).

His54 is an active-site residue.

Belongs to the thioester dehydratase family. FabZ subfamily.

It localises to the cytoplasm. The catalysed reaction is a (3R)-hydroxyacyl-[ACP] = a (2E)-enoyl-[ACP] + H2O. Functionally, involved in unsaturated fatty acids biosynthesis. Catalyzes the dehydration of short chain beta-hydroxyacyl-ACPs and long chain saturated and unsaturated beta-hydroxyacyl-ACPs. In Shewanella pealeana (strain ATCC 700345 / ANG-SQ1), this protein is 3-hydroxyacyl-[acyl-carrier-protein] dehydratase FabZ.